Consider the following 1258-residue polypeptide: Cohesin subunit SA-1 (1258 aa).

Residues 1 to 84 are disordered; the sequence is MITSELPVLQ…HPQQNGEGEP (84 aa). Positions 10–19 are enriched in polar residues; it reads QDSTNETTAH. Phosphoserine is present on Ser-24. A compositionally biased stretch (basic and acidic residues) spans 53 to 62; sequence SPGEKSRIEA. The SCD domain maps to 296–381; it reads FVHRYRDAIA…NRFKDRIVSM (86 aa). Residues Ser-756, Ser-1062, and Ser-1065 each carry the phosphoserine modification. Disordered stretches follow at residues 1055–1096 and 1129–1148; these read GGED…SLDN and MGDQIQEPESEHGSEPDFLH. Over residues 1062-1074 the composition is skewed to low complexity; it reads SVNSGSSSSKTSS. Positions 1076–1087 are enriched in basic residues; sequence RNKKGRPPLHKK. Position 1093 is a phosphoserine (Ser-1093). Positions 1137–1146 are enriched in basic and acidic residues; that stretch reads ESEHGSEPDF. Lys-1161 participates in a covalent cross-link: Glycyl lysine isopeptide (Lys-Gly) (interchain with G-Cter in SUMO2).

This sequence belongs to the SCC3 family. As to quaternary structure, cohesin complexes are composed of a heterodimer between a SMC1 protein (SMC1A or SMC1B) and SMC3, which are attached via their hinge domain, and RAD21 which link them at their heads, and one STAG protein (STAG1, STAG2 or STAG3). In cohesin complexes, STAG1 is mutually exclusive with STAG2 and STAG3. Interacts directly with RAD21 in cohesin complex. The cohesin complex interacts with the cohesin loading complex subunits NIPBL/Scc2 (via HEAT repeats) and MAU2/Scc4. NIPBL directly contacts all members of the complex, RAD21, SMC1A/B, SMC3 and STAG1. In terms of processing, phosphorylated by PLK1. The large dissociation of cohesin from chromosome arms during prophase is partly due to its phosphorylation.

Its subcellular location is the nucleus. The protein resides in the chromosome. It is found in the centromere. Its function is as follows. Component of cohesin complex, a complex required for the cohesion of sister chromatids after DNA replication. The cohesin complex apparently forms a large proteinaceous ring within which sister chromatids can be trapped. At anaphase, the complex is cleaved and dissociates from chromatin, allowing sister chromatids to segregate. The cohesin complex may also play a role in spindle pole assembly during mitosis. The polypeptide is Cohesin subunit SA-1 (STAG1) (Homo sapiens (Human)).